The sequence spans 101 residues: Signal recognition particle 19 kDa protein (101 aa).

Belongs to the SRP19 family. In terms of assembly, part of the signal recognition particle protein translocation system, which is composed of SRP and FtsY. Archaeal SRP consists of a 7S RNA molecule of 300 nucleotides and two protein subunits: SRP54 and SRP19.

The protein resides in the cytoplasm. Its function is as follows. Involved in targeting and insertion of nascent membrane proteins into the cytoplasmic membrane. Binds directly to 7S RNA and mediates binding of the 54 kDa subunit of the SRP. This is Signal recognition particle 19 kDa protein from Thermofilum pendens (strain DSM 2475 / Hrk 5).